The sequence spans 107 residues: U1-lycotoxin-Ls1d (107 aa).

The first 20 residues, 1–20, serve as a signal peptide directing secretion; that stretch reads MMKVLVVVALLVTLISYSSS. Residues 21–41 constitute a propeptide that is removed on maturation; that stretch reads EGIDDLEADELLSLMANEQTR. Disulfide bonds link C44-C59, C51-C68, C58-C86, and C70-C84.

It belongs to the neurotoxin 19 (CSTX) family. 04 (U1-Lctx) subfamily. In terms of tissue distribution, expressed by the venom gland.

The protein localises to the secreted. This is U1-lycotoxin-Ls1d from Lycosa singoriensis (Wolf spider).